A 610-amino-acid chain; its full sequence is Dopamine beta-hydroxylase (610 aa).

At 1–9 (MQVPSPSVR) the chain is on the cytoplasmic side. A helical; Signal-anchor for type II membrane protein transmembrane segment spans residues 10–30 (EAASMYGTAVAVFLVILVAAL). The Intragranular portion of the chain corresponds to 31 to 610 (QGSAPAESPF…TVLNISGGKG (580 aa)). Positions 50 to 166 (GTLELSWNIS…GTVHLVYGFL (117 aa)) constitute a DOMON domain. 6 cysteine pairs are disulfide-bonded: cysteine 147/cysteine 589, cysteine 225/cysteine 276, cysteine 262/cysteine 288, cysteine 383/cysteine 496, cysteine 387/cysteine 558, and cysteine 459/cysteine 481. An N-linked (GlcNAc...) asparagine glycan is attached at asparagine 177. Tyrosine 223 is an active-site residue. Cu(2+) is bound by residues histidine 255 and histidine 256. Positions 326, 405, 407, and 480 each coordinate Cu(2+). Histidine 405 is a catalytic residue. N-linked (GlcNAc...) asparagine glycosylation is present at asparagine 559. The disordered stretch occupies residues 585 to 610 (PTPHCPASQAQSPAGPTVLNISGGKG).

This sequence belongs to the copper type II ascorbate-dependent monooxygenase family. Homotetramer; composed of two disulfide-linked dimers. Requires Cu(2+) as cofactor. Post-translationally, proteolytic cleavage after the membrane-anchor leads to the release of the soluble form. In terms of processing, N-glycosylated. Detected in chromaffin granules in the adrenal medulla (at protein level). Detected in adrenal medulla.

The protein localises to the cytoplasmic vesicle. The protein resides in the secretory vesicle lumen. Its subcellular location is the secretory vesicle. It localises to the chromaffin granule lumen. It is found in the secretory vesicle membrane. The protein localises to the chromaffin granule membrane. It carries out the reaction dopamine + 2 L-ascorbate + O2 = (R)-noradrenaline + 2 monodehydro-L-ascorbate radical + H2O. The protein operates within catecholamine biosynthesis; (R)-noradrenaline biosynthesis; (R)-noradrenaline from dopamine: step 1/1. Functionally, catalyzes the hydroxylation of dopamine to noradrenaline (also known as norepinephrine), and is thus vital for regulation of these neurotransmitters. The chain is Dopamine beta-hydroxylase (DBH) from Bos taurus (Bovine).